The primary structure comprises 134 residues: Phosphoribosyl-AMP cyclohydrolase (134 aa).

Aspartate 77 is a binding site for Mg(2+). Cysteine 78 lines the Zn(2+) pocket. The Mg(2+) site is built by aspartate 79 and aspartate 81. The Zn(2+) site is built by cysteine 95 and cysteine 102.

Belongs to the PRA-CH family. In terms of assembly, homodimer. Mg(2+) is required as a cofactor. Zn(2+) serves as cofactor.

The protein localises to the cytoplasm. The catalysed reaction is 1-(5-phospho-beta-D-ribosyl)-5'-AMP + H2O = 1-(5-phospho-beta-D-ribosyl)-5-[(5-phospho-beta-D-ribosylamino)methylideneamino]imidazole-4-carboxamide. The protein operates within amino-acid biosynthesis; L-histidine biosynthesis; L-histidine from 5-phospho-alpha-D-ribose 1-diphosphate: step 3/9. Its function is as follows. Catalyzes the hydrolysis of the adenine ring of phosphoribosyl-AMP. The protein is Phosphoribosyl-AMP cyclohydrolase of Pseudomonas paraeruginosa (strain DSM 24068 / PA7) (Pseudomonas aeruginosa (strain PA7)).